Consider the following 431-residue polypeptide: Serine/threonine-protein kinase SSN3 (431 aa).

Positions 27–355 constitute a Protein kinase domain; that stretch reads YQIIGYIAAG…ADNALVHPYF (329 aa). Residues 33-41 and Lys59 each bind ATP; that span reads IAAGTYGKV. Asp174 (proton acceptor) is an active-site residue. Positions 397–431 are disordered; the sequence is RHGGAYDDQHNNSNNNTNNSLNANNANNVPRKRAR. The segment covering 407-424 has biased composition (low complexity); it reads NNSNNNTNNSLNANNANN.

It belongs to the protein kinase superfamily. CMGC Ser/Thr protein kinase family. CDC2/CDKX subfamily. In terms of assembly, component of the srb8-11 complex, a regulatory module of the Mediator complex. Mg(2+) is required as a cofactor.

It localises to the nucleus. It catalyses the reaction L-seryl-[protein] + ATP = O-phospho-L-seryl-[protein] + ADP + H(+). It carries out the reaction L-threonyl-[protein] + ATP = O-phospho-L-threonyl-[protein] + ADP + H(+). The catalysed reaction is [DNA-directed RNA polymerase] + ATP = phospho-[DNA-directed RNA polymerase] + ADP + H(+). In terms of biological role, component of the srb8-11 complex. The srb8-11 complex is a regulatory module of the Mediator complex which is itself dependent transcription. The srb8-11 complex may be involved in the transcriptional repression of a subset of genes regulated by Mediator. It may inhibit the association of the Mediator complex with RNA polymerase II to form the holoenzyme complex. The srb8-11 complex phosphorylates the C-terminal domain (CTD) of the largest subunit of RNA polymerase II. The polypeptide is Serine/threonine-protein kinase SSN3 (SSN3) (Scheffersomyces stipitis (strain ATCC 58785 / CBS 6054 / NBRC 10063 / NRRL Y-11545) (Yeast)).